Here is a 142-residue protein sequence, read N- to C-terminus: Large ribosomal subunit protein uL13 (142 aa).

The protein belongs to the universal ribosomal protein uL13 family. Part of the 50S ribosomal subunit.

This protein is one of the early assembly proteins of the 50S ribosomal subunit, although it is not seen to bind rRNA by itself. It is important during the early stages of 50S assembly. The polypeptide is Large ribosomal subunit protein uL13 (Azotobacter vinelandii (strain DJ / ATCC BAA-1303)).